The primary structure comprises 291 residues: Acetylglutamate kinase (291 aa).

Substrate contacts are provided by residues 61–62 (GG), Arg-83, and Asn-187.

It belongs to the acetylglutamate kinase family. ArgB subfamily.

The protein resides in the cytoplasm. It carries out the reaction N-acetyl-L-glutamate + ATP = N-acetyl-L-glutamyl 5-phosphate + ADP. Its pathway is amino-acid biosynthesis; L-arginine biosynthesis; N(2)-acetyl-L-ornithine from L-glutamate: step 2/4. Catalyzes the ATP-dependent phosphorylation of N-acetyl-L-glutamate. The polypeptide is Acetylglutamate kinase (Methanoregula boonei (strain DSM 21154 / JCM 14090 / 6A8)).